A 274-amino-acid polypeptide reads, in one-letter code: Pantothenate synthetase (274 aa).

An ATP-binding site is contributed by 27-34 (MGALHQGH). Catalysis depends on H34, which acts as the Proton donor. Q58 lines the (R)-pantoate pocket. Q58 is a binding site for beta-alanine. 144–147 (GKKD) provides a ligand contact to ATP. A (R)-pantoate-binding site is contributed by Q150. Residues I173 and 181–184 (LSSR) contribute to the ATP site.

Belongs to the pantothenate synthetase family. Homodimer.

It localises to the cytoplasm. The enzyme catalyses (R)-pantoate + beta-alanine + ATP = (R)-pantothenate + AMP + diphosphate + H(+). Its pathway is cofactor biosynthesis; (R)-pantothenate biosynthesis; (R)-pantothenate from (R)-pantoate and beta-alanine: step 1/1. In terms of biological role, catalyzes the condensation of pantoate with beta-alanine in an ATP-dependent reaction via a pantoyl-adenylate intermediate. The sequence is that of Pantothenate synthetase from Sulfurovum sp. (strain NBC37-1).